We begin with the raw amino-acid sequence, 153 residues long: Transcriptional repressor NrdR (153 aa).

The segment at 3–34 is a zinc-finger region; that stretch reads CPYCGHPDTRVVDSRPSDEGMAIRRRRECPSC. The ATP-cone domain occupies 49–136; sequence LMVVKRDGRK…VYREFDSVER (88 aa).

Belongs to the NrdR family. Zn(2+) serves as cofactor.

Functionally, negatively regulates transcription of bacterial ribonucleotide reductase nrd genes and operons by binding to NrdR-boxes. The protein is Transcriptional repressor NrdR of Thermus thermophilus (strain ATCC BAA-163 / DSM 7039 / HB27).